We begin with the raw amino-acid sequence, 879 residues long: Leucine--tRNA ligase (879 aa).

Positions 45–55 match the 'HIGH' region motif; that stretch reads PYPSGALHMGH. Positions 637-641 match the 'KMSKS' region motif; the sequence is KMSKS. Residue Lys640 participates in ATP binding.

This sequence belongs to the class-I aminoacyl-tRNA synthetase family.

The protein localises to the cytoplasm. It catalyses the reaction tRNA(Leu) + L-leucine + ATP = L-leucyl-tRNA(Leu) + AMP + diphosphate. The chain is Leucine--tRNA ligase from Xylella fastidiosa (strain M12).